The following is a 473-amino-acid chain: Iron transporter SMF3 (473 aa).

Helical transmembrane passes span 14–34 (FIGPGILVSVAYMDPGNYATS) and 44–64 (TLLFSIFISNIFAVLLQCLCV). Residue N87 is glycosylated (N-linked (GlcNAc...) asparagine). A run of 9 helical transmembrane segments spans residues 97–117 (AIIATDLAEVVGTAIALQILF), 119–139 (IPLTWGVLLTVLDVLVILMFY), 152–172 (FEFGVGILVIGTCICFVLELF), 198–218 (ALYISLGILGATVMPHSLYLG), 257–277 (LIISLFLIATFVNSAILIVAG), 297–317 (LLVHYISPAAGLIFALAMLCS), 352–372 (LIAIVPCLFVTLTMGEKGISD), 373–393 (ILNFSQVVLSLILPIVSAPLI), and 448–468 (VFVWALIGSLNCYLVISYLLG).

The protein belongs to the NRAMP family.

Its subcellular location is the vacuole membrane. The protein localises to the endoplasmic reticulum membrane. In terms of biological role, has a role in controlling the cellular iron ion levels. Mobilizes vacuolar stores of iron in conditions of low iron levels. The polypeptide is Iron transporter SMF3 (SMF3) (Saccharomyces cerevisiae (strain ATCC 204508 / S288c) (Baker's yeast)).